We begin with the raw amino-acid sequence, 121 residues long: Large ribosomal subunit protein uL18 (121 aa).

The protein belongs to the universal ribosomal protein uL18 family. In terms of assembly, part of the 50S ribosomal subunit; part of the 5S rRNA/L5/L18/L25 subcomplex. Contacts the 5S and 23S rRNAs.

This is one of the proteins that bind and probably mediate the attachment of the 5S RNA into the large ribosomal subunit, where it forms part of the central protuberance. The sequence is that of Large ribosomal subunit protein uL18 from Ehrlichia chaffeensis (strain ATCC CRL-10679 / Arkansas).